Consider the following 476-residue polypeptide: Tryptophan--tRNA ligase, cytoplasmic (476 aa).

The interval 1 to 117 (MADMSNGEQG…LIVRFGSSKI (117 aa)) is dispensable to the catalytic activity. Residues 13-69 (SPLELFHSIAAQGELVRDLKARNAAKDEIDSAVKMLLSLKTSYKAATGEDYKVDCPP) enclose the WHEP-TRS domain. The interval 63–83 (YKVDCPPGDPAPESGEGLDAT) is disordered. Lys159 is modified (N6-succinyllysine). Residues 169 to 178 (PSSEAMHVGH) carry the 'HIGH' region motif. Positions 354-358 (KMSAS) match the 'KMSKS' region motif. Phosphoserine is present on Ser356.

Belongs to the class-I aminoacyl-tRNA synthetase family. As to quaternary structure, homodimer. Interacts with oxidized form of GAPDH. Post-translationally, proteolytic cleavage generates 2 forms; T1-TrpRS and T2-TrpRS.

It is found in the cytoplasm. It carries out the reaction tRNA(Trp) + L-tryptophan + ATP = L-tryptophyl-tRNA(Trp) + AMP + diphosphate + H(+). In terms of biological role, T1-TrpRS has aminoacylation activity while T2-TrpRS lacks it. T1-TrpRS and T2-TrpRS possess angiostatic activity. T2-TrpRS inhibits fluid shear stress-activated responses of endothelial cells. Regulates ERK, Akt, and eNOS activation pathways that are associated with angiogenesis, cytoskeletal reorganization and shear stress-responsive gene expression. The chain is Tryptophan--tRNA ligase, cytoplasmic (WARS1) from Bos taurus (Bovine).